The sequence spans 98 residues: Aspartyl/glutamyl-tRNA(Asn/Gln) amidotransferase subunit C (98 aa).

Residues 77-98 (NEAPNPEGDFFRVPQILNTDEE) are disordered.

It belongs to the GatC family. As to quaternary structure, heterotrimer of A, B and C subunits.

It catalyses the reaction L-glutamyl-tRNA(Gln) + L-glutamine + ATP + H2O = L-glutaminyl-tRNA(Gln) + L-glutamate + ADP + phosphate + H(+). The enzyme catalyses L-aspartyl-tRNA(Asn) + L-glutamine + ATP + H2O = L-asparaginyl-tRNA(Asn) + L-glutamate + ADP + phosphate + 2 H(+). Allows the formation of correctly charged Asn-tRNA(Asn) or Gln-tRNA(Gln) through the transamidation of misacylated Asp-tRNA(Asn) or Glu-tRNA(Gln) in organisms which lack either or both of asparaginyl-tRNA or glutaminyl-tRNA synthetases. The reaction takes place in the presence of glutamine and ATP through an activated phospho-Asp-tRNA(Asn) or phospho-Glu-tRNA(Gln). The polypeptide is Aspartyl/glutamyl-tRNA(Asn/Gln) amidotransferase subunit C (Crocosphaera subtropica (strain ATCC 51142 / BH68) (Cyanothece sp. (strain ATCC 51142))).